The primary structure comprises 349 residues: Isopentenyl-diphosphate delta-isomerase (349 aa).

A substrate-binding site is contributed by 6 to 7 (RK). FMN contacts are provided by residues 62–64 (AMT), S93, and N122. Q152 lines the substrate pocket. E153 provides a ligand contact to Mg(2+). Residues K184, T214, 258 to 259 (GG), and 280 to 281 (AG) contribute to the FMN site.

This sequence belongs to the IPP isomerase type 2 family. Homooctamer. Dimer of tetramers. It depends on FMN as a cofactor. The cofactor is NADPH. Requires Mg(2+) as cofactor.

Its subcellular location is the cytoplasm. It carries out the reaction isopentenyl diphosphate = dimethylallyl diphosphate. Its function is as follows. Involved in the biosynthesis of isoprenoids. Catalyzes the 1,3-allylic rearrangement of the homoallylic substrate isopentenyl (IPP) to its allylic isomer, dimethylallyl diphosphate (DMAPP). In Bacillus licheniformis (strain ATCC 14580 / DSM 13 / JCM 2505 / CCUG 7422 / NBRC 12200 / NCIMB 9375 / NCTC 10341 / NRRL NRS-1264 / Gibson 46), this protein is Isopentenyl-diphosphate delta-isomerase.